The primary structure comprises 340 residues: Gallate dioxygenase (340 aa).

His-45 acts as the Proton donor in catalysis. His-113 serves as the catalytic Proton acceptor.

It belongs to the LigB/MhpB extradiol dioxygenase family. Fe(2+) is required as a cofactor.

It carries out the reaction 3,4,5-trihydroxybenzoate + O2 = (1E)-4-oxobut-1-ene-1,2,4-tricarboxylate + 2 H(+). Its function is as follows. Ring-cleavage dioxygenase that acts specifically on gallate to produce the keto-tautomer of 4-oxalomesaconate. Mediates the first step of gallate degradation pathway. The chain is Gallate dioxygenase (galA) from Pseudomonas putida (strain ATCC 47054 / DSM 6125 / CFBP 8728 / NCIMB 11950 / KT2440).